The sequence spans 123 residues: Large ribosomal subunit protein bL12 (123 aa).

This sequence belongs to the bacterial ribosomal protein bL12 family. In terms of assembly, homodimer. Part of the ribosomal stalk of the 50S ribosomal subunit. Forms a multimeric L10(L12)X complex, where L10 forms an elongated spine to which 2 to 4 L12 dimers bind in a sequential fashion. Binds GTP-bound translation factors.

Forms part of the ribosomal stalk which helps the ribosome interact with GTP-bound translation factors. Is thus essential for accurate translation. This Photorhabdus laumondii subsp. laumondii (strain DSM 15139 / CIP 105565 / TT01) (Photorhabdus luminescens subsp. laumondii) protein is Large ribosomal subunit protein bL12.